A 1060-amino-acid chain; its full sequence is FACT complex subunit SPT16 (1060 aa).

Positions 458 to 490 (FNDDNETQKENNNNNNKRPGLSQTSNTTALKLE) are disordered. Residues 478-490 (LSQTSNTTALKLE) are compositionally biased toward polar residues. A coiled-coil region spans residues 508–532 (NADDANSEKLRQEIQIKLHEKRLQE). Residues 977 to 1060 (QGESDEEEES…AKADRNSGFD (84 aa)) form a disordered region. Composition is skewed to acidic residues over residues 979 to 990 (ESDEEEESDEES) and 997 to 1044 (EDPQ…EDWD). Over residues 1045–1060 (ALERKAAKADRNSGFD) the composition is skewed to basic and acidic residues.

It belongs to the peptidase M24 family. SPT16 subfamily. As to quaternary structure, forms a stable heterodimer with POB3. The SPT16-POB3 dimer weakly associates with multiple molecules of NHP6 to form the FACT complex.

Its subcellular location is the nucleus. The protein localises to the chromosome. Its function is as follows. Component of the FACT complex, a general chromatin factor that acts to reorganize nucleosomes. The FACT complex is involved in multiple processes that require DNA as a template such as mRNA elongation, DNA replication and DNA repair. During transcription elongation the FACT complex acts as a histone chaperone that both destabilizes and restores nucleosomal structure. It facilitates the passage of RNA polymerase II and transcription by promoting the dissociation of one histone H2A-H2B dimer from the nucleosome, then subsequently promotes the reestablishment of the nucleosome following the passage of RNA polymerase II. This is FACT complex subunit SPT16 (CDC68) from Candida albicans (strain SC5314 / ATCC MYA-2876) (Yeast).